Consider the following 449-residue polypeptide: C4-dicarboxylate transport protein (449 aa).

8 consecutive transmembrane segments (helical) span residues 18–38, 61–81, 93–113, 159–179, 202–222, 244–264, 346–366, and 369–389; these read PFYLQLYFWVIIAIILGALLG, MIISPVIFLTIVTGIASVAHV, VYFLFFSTLALLLGLVVAHVV, FVGDNILQVLFVAVLFGIALA, LVQMLMKMAPIGAFGAIAFTI, SLLFVLVILGAVSWLCGFSIL, LFLVAMLSSKGAAGVSGAGFI, and AATLAVVPEVPIAGMALILGV.

This sequence belongs to the dicarboxylate/amino acid:cation symporter (DAACS) (TC 2.A.23) family.

It is found in the cell inner membrane. Functionally, responsible for the transport of dicarboxylates such as succinate, fumarate, and malate from the periplasm across the membrane. In Xylella fastidiosa (strain M23), this protein is C4-dicarboxylate transport protein.